The primary structure comprises 397 residues: tRNA(Ile)-lysidine synthase (397 aa).

Residue 44-49 (SGGADS) participates in ATP binding.

It belongs to the tRNA(Ile)-lysidine synthase family.

It is found in the cytoplasm. It catalyses the reaction cytidine(34) in tRNA(Ile2) + L-lysine + ATP = lysidine(34) in tRNA(Ile2) + AMP + diphosphate + H(+). Its function is as follows. Ligates lysine onto the cytidine present at position 34 of the AUA codon-specific tRNA(Ile) that contains the anticodon CAU, in an ATP-dependent manner. Cytidine is converted to lysidine, thus changing the amino acid specificity of the tRNA from methionine to isoleucine. This Rhodopirellula baltica (strain DSM 10527 / NCIMB 13988 / SH1) protein is tRNA(Ile)-lysidine synthase.